A 611-amino-acid chain; its full sequence is DNA mismatch repair protein MutL (611 aa).

It belongs to the DNA mismatch repair MutL/HexB family.

This protein is involved in the repair of mismatches in DNA. It is required for dam-dependent methyl-directed DNA mismatch repair. May act as a 'molecular matchmaker', a protein that promotes the formation of a stable complex between two or more DNA-binding proteins in an ATP-dependent manner without itself being part of a final effector complex. This is DNA mismatch repair protein MutL from Borrelia garinii subsp. bavariensis (strain ATCC BAA-2496 / DSM 23469 / PBi) (Borreliella bavariensis).